A 112-amino-acid chain; its full sequence is Integration host factor subunit alpha (112 aa).

Belongs to the bacterial histone-like protein family. Heterodimer of an alpha and a beta chain.

Functionally, this protein is one of the two subunits of integration host factor, a specific DNA-binding protein that functions in genetic recombination as well as in transcriptional and translational control. This chain is Integration host factor subunit alpha, found in Sinorhizobium medicae (strain WSM419) (Ensifer medicae).